A 1318-amino-acid chain; its full sequence is Uromodulin-like 1 (1318 aa).

Positions Met-1–Ala-21 are cleaved as a signal peptide. The Extracellular portion of the chain corresponds to Ser-22–Tyr-1272. An EMI domain is found at Gly-33 to Leu-106. Cystine bridges form between Cys-37–Cys-94, Cys-61–Cys-70, and Cys-93–Cys-104. A glycan (N-linked (GlcNAc...) asparagine) is linked at Asn-89. Asn-109 carries an N-linked (GlcNAc...) asparagine glycan. One can recognise a WAP domain in the interval Phe-114–Ala-158. Asn-172 is a glycosylation site (N-linked (GlcNAc...) asparagine). Residues Asp-264–Pro-313 enclose the EGF-like 1; calcium-binding domain. Positions Pro-314 to Gln-398 constitute a Fibronectin type-III 1 domain. Asn-322, Asn-335, and Asn-417 each carry an N-linked (GlcNAc...) asparagine glycan. Residues Asn-396–Glu-510 enclose the SEA 1 domain. Residues Asp-507 to Glu-552 enclose the EGF-like 2; calcium-binding domain. 3 disulfides stabilise this stretch: Cys-511/Cys-525, Cys-519/Cys-534, and Cys-536/Cys-551. The N-linked (GlcNAc...) asparagine glycan is linked to Asn-585. A disordered region spans residues Gly-593 to His-655. Residues Val-702 to Lys-791 enclose the Fibronectin type-III 2 domain. N-linked (GlcNAc...) asparagine glycosylation is present at Asn-713. Residues Ala-788–Glu-900 form the SEA 2 domain. The 42-residue stretch at Asp-897 to Glu-938 folds into the EGF-like 3; calcium-binding domain. Disulfide bonds link Cys-901/Cys-914 and Cys-908/Cys-923. A disordered region spans residues Glu-938–Arg-957. N-linked (GlcNAc...) asparagine glycosylation is found at Asn-984 and Asn-1050. Positions Leu-992–Phe-1235 constitute a ZP domain. Cysteines 1157 and 1215 form a disulfide. Residues Val-1273–Val-1293 traverse the membrane as a helical segment. Topologically, residues Arg-1294–Glu-1318 are cytoplasmic.

In terms of tissue distribution, isoform 4 is expressed at low level in kidney, testis and fetal thymus. Isoform 3 is expressed at low level in prostate, testis and fetal thymus.

The protein resides in the cell membrane. It localises to the cytoplasm. The protein is Uromodulin-like 1 (UMODL1) of Homo sapiens (Human).